We begin with the raw amino-acid sequence, 580 residues long: Tetratricopeptide repeat protein 39C (580 aa).

3 TPR repeats span residues Ser312–Gln345, His350–Ser383, and Gly482–Arg515.

It belongs to the TTC39 family.

The protein is Tetratricopeptide repeat protein 39C (Ttc39c) of Mus musculus (Mouse).